A 96-amino-acid chain; its full sequence is Fluoride-specific ion channel FluC 1 (96 aa).

2 consecutive transmembrane segments (helical) span residues 4-24 (LIQGLGVGAGAALGVCVRLAL) and 26-46 (LWLGDSAWPILTINVLGAFLM). G61 and T64 together coordinate Na(+). The chain crosses the membrane as a helical span at residues 69-89 (MMLNDVSFYFFTAVGCILAWL).

This sequence belongs to the fluoride channel Fluc/FEX (TC 1.A.43) family.

The protein resides in the cell membrane. The catalysed reaction is fluoride(in) = fluoride(out). Na(+) is not transported, but it plays an essential structural role and its presence is essential for fluoride channel function. In terms of biological role, fluoride-specific ion channel. Important for reducing fluoride concentration in the cell, thus reducing its toxicity. In Corynebacterium glutamicum (strain ATCC 13032 / DSM 20300 / JCM 1318 / BCRC 11384 / CCUG 27702 / LMG 3730 / NBRC 12168 / NCIMB 10025 / NRRL B-2784 / 534), this protein is Fluoride-specific ion channel FluC 1.